Consider the following 1657-residue polypeptide: Ras GTPase-activating-like protein IQGAP1 (1657 aa).

Position 2 is an N-acetylserine (S2). At S2 the chain carries Phosphoserine. Residues 44 to 159 form the Calponin-homology (CH) domain; the sequence is LCHLEEAKRW…YCIHALSLYL (116 aa). Y172 carries the post-translational modification Phosphotyrosine. A Phosphoserine modification is found at S330. In terms of domain architecture, WW spans 679 to 712; sequence GDNNSKWVKHWVKGGYYYYHNLETQEGGWDEPPN. 4 IQ domains span residues 745 to 774, 775 to 804, 805 to 834, and 835 to 864; these read NEGL…FLKK, QIPA…YLRS, HKDE…YFRD, and HIND…AEDP. The C1 stretch occupies residues 956 to 1274; that stretch reads GGLKALSKEK…FFQTACDVPE (319 aa). The Ras-GAP domain occupies 1020 to 1269; that stretch reads YLLLRLFKTA…QKFRRFFQTA (250 aa). A C2 region spans residues 1276–1657; it reads QDKFNVDEYS…FLLNKKFYGK (382 aa). The interval 1410–1448 is disordered; sequence TPATSEQEAEHQRAMQRRAIRDAKTPDKMKKSKSVKEDS. Residues 1417-1448 are compositionally biased toward basic and acidic residues; it reads EAEHQRAMQRRAIRDAKTPDKMKKSKSVKEDS. Residue S1441 is modified to Phosphoserine; by PKC. S1443 bears the Phosphoserine; by PKC/PRKCE mark.

In terms of assembly, interacts with CDC42; the interaction is demonstrated with IQGAP1 in GTP-bound and in nucleotide-free state. Interacts with RAC1. Does not interact with RHOA. Interacts with TSG101. Interacts with PAK6. Interacts with TMEM14B; this interaction increases IQGAP1 phosphorylation and induces its nuclear translocation. Interacts with SASH1. Interacts with PJVK. Interacts with SLC26A4; this interaction enhances the chloride-bicarbonate exchange activity of SLC26A4. Interacts with SVEP1. Interacts with ILK; the interaction is required for localization of IQGAP to the cell cortex. As to quaternary structure, (Microbial infection) Interacts with ebolavirus vp40. (Microbial infection) Interacts with human cytomegalovirus protein UL5. In terms of assembly, (Microbial infection) Interacts with C.jejuni invasion antigen D (CiaD). Post-translationally, phosphorylation of Ser-1443 by PKC/PRKCE prevents interaction between C1 and C2, allowing binding of nucleotide-free CDC42. Ser-1443 phosphorylation enhances the ability to promote neurite outgrowth. As to expression, expressed in the placenta, lung, and kidney. A lower level expression is seen in the heart, liver, skeletal muscle and pancreas.

The protein resides in the cell membrane. It is found in the nucleus. Its subcellular location is the cytoplasm. The protein localises to the cell cortex. It localises to the apical cell membrane. The protein resides in the basolateral cell membrane. Its function is as follows. Plays a crucial role in regulating the dynamics and assembly of the actin cytoskeleton. Recruited to the cell cortex by interaction with ILK which allows it to cooperate with its effector DIAPH1 to locally stabilize microtubules and allow stable insertion of caveolae into the plasma membrane. Binds to activated CDC42 but does not stimulate its GTPase activity. Associates with calmodulin. May promote neurite outgrowth. May play a possible role in cell cycle regulation by contributing to cell cycle progression after DNA replication arrest. The polypeptide is Ras GTPase-activating-like protein IQGAP1 (IQGAP1) (Homo sapiens (Human)).